The chain runs to 386 residues: Aspartate carbamoyltransferase 1, chloroplastic (386 aa).

Residues 1–39 constitute a chloroplast transit peptide; it reads MTVASMLSSNSMNVGVSNPKMSSKTSACCLLNRPWPSSC. Residues R132 and T133 each coordinate carbamoyl phosphate. 2 residues coordinate UMP: R132 and T133. Residue K162 participates in L-aspartate binding. Residues R183, H211, and Q214 each contribute to the carbamoyl phosphate site. UMP-binding residues include R183 and H211. Residues R244 and R306 each coordinate UMP. R244 and R306 together coordinate L-aspartate. The carbamoyl phosphate site is built by L346 and P347.

Belongs to the aspartate/ornithine carbamoyltransferase superfamily. ATCase family. As to quaternary structure, homotrimer.

The protein resides in the plastid. It is found in the chloroplast. It carries out the reaction carbamoyl phosphate + L-aspartate = N-carbamoyl-L-aspartate + phosphate + H(+). It participates in pyrimidine metabolism; UMP biosynthesis via de novo pathway; (S)-dihydroorotate from bicarbonate: step 2/3. Feedback inhibited by UMP. In terms of biological role, catalyzes the condensation of carbamoyl phosphate and aspartate to form carbamoyl aspartate and inorganic phosphate, the committed step in the de novo pyrimidine nucleotide biosynthesis pathway. This Pisum sativum (Garden pea) protein is Aspartate carbamoyltransferase 1, chloroplastic (PYRB1).